The chain runs to 333 residues: HTH-type transcriptional repressor PurR (333 aa).

The region spanning 2 to 56 (ATIKDVAKMAGVSTTTVSHVINKTRFVAKETEQQVLQAIKNLNYSPSAVARSLKV) is the HTH lacI-type domain. The segment at residues 4-23 (IKDVAKMAGVSTTTVSHVIN) is a DNA-binding region (H-T-H motif). A DNA-binding region spans residues 48–56 (SAVARSLKV). Hypoxanthine contacts are provided by Y73, K189, T191, F220, and D274.

In terms of assembly, homodimer.

It functions in the pathway purine metabolism; purine nucleotide biosynthesis [regulation]. Its function is as follows. Is the main repressor of the genes involved in the de novo synthesis of purine nucleotides, regulating purB, purC, purEK, purF, purHD, purL, purMN and guaBA expression. PurR is allosterically activated to bind its cognate DNA by binding the purine corepressors, hypoxanthine or guanine, thereby effecting transcription repression. This Histophilus somni (strain 2336) (Haemophilus somnus) protein is HTH-type transcriptional repressor PurR.